Reading from the N-terminus, the 233-residue chain is Ribosomal RNA small subunit methyltransferase G (233 aa).

S-adenosyl-L-methionine contacts are provided by residues Gly91, Met96, Val142–Glu143, and Arg157.

The protein belongs to the methyltransferase superfamily. RNA methyltransferase RsmG family.

It localises to the cytoplasm. The catalysed reaction is guanosine(527) in 16S rRNA + S-adenosyl-L-methionine = N(7)-methylguanosine(527) in 16S rRNA + S-adenosyl-L-homocysteine. In terms of biological role, specifically methylates the N7 position of guanine in position 527 of 16S rRNA. This is Ribosomal RNA small subunit methyltransferase G from Cupriavidus necator (strain ATCC 17699 / DSM 428 / KCTC 22496 / NCIMB 10442 / H16 / Stanier 337) (Ralstonia eutropha).